The sequence spans 2702 residues: MAKDDNNLSSLVHELRERVAASASTPANNLRHSSGDEDALEIRFRAVIPNLLNTYVVPSLGNGREVTAVLKLVGHTARNIPGVFYHGTPSAILPVIARIIPFFAEPEFVPGHGVLLETVGSLLMLLRSNSRKAYRIFFHDALQAIQDMQPIASLHSIEPEVCESHIPFRCFCMSFSGIGGDLPDANKPRDGDGLVLNLLGANRWQPFATCILKLICKCLTEGTLYVQGLIHTSFFKAACSLVCCGGADVQMACFEFATLVGSILTFNILPHVALIQSIILLLSADEGLPVYRNTIYDSTIGRFLTAVYSSCSDAAVKLTAESLVLVLSHALQRTKSEELKASLCSAYVRIVKSCPPCIWKIHCLLELLHLPEPCFQLIECFKAVLIVLGPGCVRVETTKCGSHTSATSDRPVQGINAGKKRHIEDESTYKRKRQKVGDDIRRGVYFAPEFADETDGKDAASLREMLISTVESLKPPPAGPSLSQTESSIVALSMLTNAFCFCPWTDMTHRLFNQMYAWIPWIAGQVEETNPIMFDISIYLEGIHNLLLVGVDPQYEYTSKGNDLVAIQFLLKLPWTHYMLFKTPSSLVKSKCLSVGIWTKLGLQDGSDFDIFSWSLSDDFEQVQAVAAISMPLKVLFSGLGALLHMFPKLEHLLEEKELMIKKAIPQSLGFLSCLYGSSTTDSEKTACHLLLHEDLKKDETLNSLLQGFRCSKCDKFIEREDEKHFRIIETPEMVKLKMDHHRDYFNLQSLYFNLLYDESSEETQLACVEVIRRILGHTSPDILVRTRSQWIRCLQYLLVHVNTDVREAFCAQIGIFVQHPIVSCLFLSEDATEKSCERNFFNLIEHSLAAAKDLLVIQTLLETTAEVMVAVDVTSELFLICLFLLIDQLDHPNLIVRINASKLINRSCYIHVKGGFATLLSTASHIQNELFDNLSVRLTSRPNVVREFAEAVLGVETEELVRKMVPAVLPKLLVYWQENAQAANTLNELAKLIDTDVVPLIVNWLPRVLAFALNQEEDKNLLSVLQLYHSQIGSDNQEIFAAALPALLDELVCFVDIADTPETDRRLQRLPDAIKKISKVLTNAEDLPGFLQNHFVGLLNSIDRKMLHADDIFLQKQALKRIKLLIEMMGHYLSTYVPKLMVLLMHAIEKDALQSEGLLVLHFFTRKLADVSPSSIKYVISQIFAALIPFLEKEKEGPHVYLDEVVKILEELVLKNRDIVKEHICEFPLLPSIPSLGELNNAIQEARGLMSLKDQLRDIVNGMKHENLNVRYMVACELSKLLYNRNEDVAALIAGELVSDMEILSSLITYLLQGCAEESRTTVGQRLKLVCADCLGAIGAIDPAKVRVASCSRFKIQCSDDDLIFELIHKHLARAFRAAQDTIIQDSAALAIQELLKIAGCEPSLAGNVVVLTPQEHVQVNVSGSRRCGGNNEVKDRGQKLWDRFSNYVKELIAPCLTSRFQLPNVSDPGSAGPIYRPSMSFRRWLSYWIRKLTAFATGSRVSIFAACRGIVRHDMQTATYLLPYLVLDVVCHGTEAARLSISEEILSVLDAAASENSGVTINSFGVGQSEVCVQAVFTLLDNLGQWVDDVKQGVALSSSLQSSGGRQVAPKSKDQVSNSTTEQDHLLVQCKYVLELLLAIPKVTLARASFRCQAYARSLMYLESHVRGKSGSLNPAAEKTGIFENADVSSLMGIYSCLDEPDGLSGFASLSKSLNLQDQLLINKKSGNWADVFTACEQALQMEPTSVQRHSDVLNCLLNMCHHQTMVTHVDGLISRVPEYKKTWCTQGVQAAWRLGKWDLMDEYLDGADAEGLLFSSSDSNASFDRDVAKILHAMMKKDQYSVAEGIAISKQALIAPLAAAGMDSYTRAYPFVVKLHLLRELEDFQAVLNGDSYLEKSFSTSDQVFSKAVDNWENRLRFTQSSLWTREPLLAFRRLVFGASGLGAQVGNCWLQYAKLCRLAGHYETAHRAILEAQASGAPNVHMEKAKLLWITKRSDSAIIELQQSLLNMPEGVVDSTVISSINSLLMAPPNPEPTVRNTQSFKEKKDVAKTLLLYSKWIHHSGQKQKKDVLNLYTQVKELLPWEKGYFHLAKYYDELYVDARKCQQESSVFSSAGSKKGSVSSNLSTEKAGWDYLFKGMYFYAKALHSGHKNLFQALPRLLTLWFDFGTIYKTSGSAGNKELKSTHMKIMSLMRGCLKDLPTYQWLTVLPQLVSRICHQNADTVLMVKNIITSVLHQFPQQGLWIMAAVSKSTVPARREAAAEIIQGARKGFNQSDRGHNLFIQFASLTDHFIKLCFHGGQPRSKVINIATEFSALKRMMPLDIIMPIQQSLTISLPAFHMNNNERHSASVFSGSDLPTISGIADEAEILSSLQRPKKIILLGNDGIEYPFLCKPKDDLRKDARMMEFTAMINRLLSKYPESRRRKLYIRTFAVAPLTEDCGLVEWVPHTRGLRHILQDIYISCGKFDRQKTNPQIKRIYDQCAVKKEYEMLKTKILPMFPPVFHKWFLTTFSEPAAWFRSRVAYAHTTAVWSMVGHIVGLGDRHGENILFDSTSGDCVHVDFSCLFDKGLQLEKPELVPFRLTQNMIDGLGITGYEGIFMRVCEITLTVLRTHRETLMSILETFIHDPLVEWTKSHKSSGVEVQNPHAQRAISSIEARLQGVVVGVPLPVEGQARRLIADAVSLENLGKMYIWWMPWF.

One can recognise an FAT domain in the interval 1646-2255 (TLARASFRCQ…LWIMAAVSKS (610 aa)). Residues 2366-2678 (IADEAEILSS…GVPLPVEGQA (313 aa)) enclose the PI3K/PI4K catalytic domain. A G-loop region spans residues 2372–2378 (ILSSLQR). Positions 2543–2551 (GLGDRHGEN) are catalytic loop. Residues 2563-2587 (HVDFSCLFDKGLQLEKPELVPFRLT) form an activation loop region. One can recognise an FATC domain in the interval 2670–2702 (VPLPVEGQARRLIADAVSLENLGKMYIWWMPWF).

This sequence belongs to the PI3/PI4-kinase family. ATM subfamily.

It localises to the nucleus. It carries out the reaction L-seryl-[protein] + ATP = O-phospho-L-seryl-[protein] + ADP + H(+). The enzyme catalyses L-threonyl-[protein] + ATP = O-phospho-L-threonyl-[protein] + ADP + H(+). Probable serine/threonine kinase. Plays a central role in cell-cycle regulation by transmitting DNA damage signals to downstream effectors of cell-cycle progression. May recognize the substrate consensus sequence [ST]-Q and phosphorylate histone variant H2AX to form H2AXS139ph at sites of DNA damage, thereby regulating DNA damage response mechanism. Seems to be required for the G2-phase checkpoint in response to replication blocks but not absolutely required in the G2-arrest response to double-strand breaks. May also be involved in the meiosis process. Required for the basal expression of RNR1 (ribonucleotide reductase large subunit). Acts in concert with telomerase to maintain telomeric DNA tracts. Not required for telomere length homeostasis. Required for effective immune responses that involve activation of DNA damage responses. This is Serine/threonine-protein kinase ATR (ATR) from Arabidopsis thaliana (Mouse-ear cress).